Here is a 382-residue protein sequence, read N- to C-terminus: Type 2 DNA topoisomerase 6 subunit A (382 aa).

Residues 14-155 (YDPQKVLKKL…MHITADRRGY (142 aa)) enclose the Topo IIA-type catalytic domain. Tyr108 acts as the O-(5'-phospho-DNA)-tyrosine intermediate in catalysis. Glu202 and Asp254 together coordinate Mg(2+).

It belongs to the TOP6A family. Homodimer. Heterotetramer of two Top6A and two Top6B chains. Requires Mg(2+) as cofactor.

The catalysed reaction is ATP-dependent breakage, passage and rejoining of double-stranded DNA.. Its function is as follows. Relaxes both positive and negative superturns and exhibits a strong decatenase activity. The sequence is that of Type 2 DNA topoisomerase 6 subunit A from Pyrococcus abyssi (strain GE5 / Orsay).